A 183-amino-acid chain; its full sequence is Capsid protein (183 aa).

Positions 136–183 (NAPILSTLPETTVVRRRGRSPRRRTPSPRRRRSQSPRRRRTQSRESQC) are disordered. A compositionally biased stretch (basic residues) spans 149-176 (VRRRGRSPRRRTPSPRRRRSQSPRRRRT). 3 positions are modified to phosphoserine; by host: Ser155, Ser162, and Ser170. The stretch at 155-161 (SPRRRTP) is one 1; half-length repeat. The 3 X 8 AA repeats of S-P-R-R-R-[PR]-[ST]-Q stretch occupies residues 155–177 (SPRRRTPSPRRRRSQSPRRRRTQ). The short motif at 158-175 (RRTPSPRRRRSQSPRRRR) is the Bipartite nuclear localization signal element. 2 tandem repeats follow at residues 162 to 169 (SPRRRRSQ) and 170 to 177 (SPRRRRTQ). An RNA binding region spans residues 177–183 (QSRESQC).

This sequence belongs to the orthohepadnavirus core antigen family. In terms of assembly, homodimerizes, then multimerizes. Interacts with cytosol exposed regions of viral L glycoprotein present in the reticulum-to-Golgi compartment. Interacts with human FLNB. Phosphorylated form interacts with host importin alpha; this interaction depends on the exposure of the NLS, which itself depends upon genome maturation and/or phosphorylation of the capsid protein. Interacts with host NUP153. Post-translationally, phosphorylated by host SRPK1, SRPK2, and maybe protein kinase C or GAPDH. Phosphorylation is critical for pregenomic RNA packaging. Protein kinase C phosphorylation is stimulated by HBx protein and may play a role in transport of the viral genome to the nucleus at the late step during the viral replication cycle.

It is found in the virion. Its subcellular location is the host cytoplasm. Its function is as follows. Self assembles to form an icosahedral capsid. Most capsids appear to be large particles with an icosahedral symmetry of T=4 and consist of 240 copies of capsid protein, though a fraction forms smaller T=3 particles consisting of 180 capsid proteins. Entering capsids are transported along microtubules to the nucleus. Phosphorylation of the capsid is thought to induce exposure of nuclear localization signal in the C-terminal portion of the capsid protein that allows binding to the nuclear pore complex via the importin (karyopherin-) alpha and beta. Capsids are imported in intact form through the nuclear pore into the nuclear basket, where it probably binds NUP153. Only capsids that contain the mature viral genome can release the viral DNA and capsid protein into the nucleoplasm. Immature capsids get stuck in the basket. Capsids encapsulate the pre-genomic RNA and the P protein. Pre-genomic RNA is reverse-transcribed into DNA while the capsid is still in the cytoplasm. The capsid can then either be directed to the nucleus, providing more genomes for transcription, or bud through the endoplasmic reticulum to provide new virions. This is Capsid protein from Hepatitis B virus genotype D (isolate France/alpha1/1989) (HBV-D).